The sequence spans 108 residues: UPF0145 protein THA_1434 (108 aa).

The protein belongs to the UPF0145 family.

This is UPF0145 protein THA_1434 from Thermosipho africanus (strain TCF52B).